The following is a 367-amino-acid chain: Protein-glutamate methylesterase/protein-glutamine glutaminase 2 (367 aa).

Positions 3 to 120 constitute a Response regulatory domain; the sequence is SVVVVDDSAF…SLDIVRIEND (118 aa). 4-aspartylphosphate is present on Asp54. A disordered region spans residues 132–174; that stretch reads RMLRTPRPVRPAPTASAPAQTAQVASAAPATAPSRPAMPATRA. The span at 143-174 shows a compositional bias: low complexity; sequence APTASAPAQTAQVASAAPATAPSRPAMPATRA. One can recognise a CheB-type methylesterase domain in the interval 175 to 367; the sequence is SRPVRDVVAI…AAAIMNGLYK (193 aa). Active-site residues include Ser187, His214, and Asp310.

The protein belongs to the CheB family. Post-translationally, phosphorylated by CheA. Phosphorylation of the N-terminal regulatory domain activates the methylesterase activity.

The protein resides in the cytoplasm. It carries out the reaction [protein]-L-glutamate 5-O-methyl ester + H2O = L-glutamyl-[protein] + methanol + H(+). It catalyses the reaction L-glutaminyl-[protein] + H2O = L-glutamyl-[protein] + NH4(+). In terms of biological role, involved in chemotaxis. Part of a chemotaxis signal transduction system that modulates chemotaxis in response to various stimuli. Catalyzes the demethylation of specific methylglutamate residues introduced into the chemoreceptors (methyl-accepting chemotaxis proteins or MCP) by CheR. Also mediates the irreversible deamidation of specific glutamine residues to glutamic acid. The polypeptide is Protein-glutamate methylesterase/protein-glutamine glutaminase 2 (Nitratidesulfovibrio vulgaris (strain ATCC 29579 / DSM 644 / CCUG 34227 / NCIMB 8303 / VKM B-1760 / Hildenborough) (Desulfovibrio vulgaris)).